We begin with the raw amino-acid sequence, 157 residues long: RNA-binding protein 3 (157 aa).

In terms of domain architecture, RRM spans 6-84; that stretch reads GKLFVGGLNF…RQIRVDHAGK (79 aa). Arg-47 is subject to Omega-N-methylarginine. The disordered stretch occupies residues 81–157; sequence HAGKSARGTR…GGNYRDNYDN (77 aa). An Asymmetric dimethylarginine; alternate modification is found at Arg-105. Residue Arg-105 is modified to Dimethylated arginine; in A2780 ovarian carcinoma cell line. An Omega-N-methylarginine; alternate modification is found at Arg-105. Residues 105–114 show a composition bias toward gly residues; it reads RGGGDQGYGS. Arg-121 and Arg-131 each carry omega-N-methylarginine. Position 147 is a phosphoserine (Ser-147). Tyr-155 carries the phosphotyrosine modification.

In terms of assembly, interacts with RPL4. Associates with the 60S ribosomal subunits in an RNA-independent manner. Associates with ribosomes. Post-translationally, arg-105 is dimethylated, probably to asymmetric dimethylarginine. Phosphorylated.

The protein resides in the nucleus. Its subcellular location is the cytoplasm. The protein localises to the cell projection. It localises to the dendrite. Functionally, cold-inducible mRNA binding protein that enhances global protein synthesis at both physiological and mild hypothermic temperatures. Reduces the relative abundance of microRNAs, when overexpressed. Enhances phosphorylation of translation initiation factors and active polysome formation. In Homo sapiens (Human), this protein is RNA-binding protein 3 (RBM3).